Here is a 607-residue protein sequence, read N- to C-terminus: Aspartate--tRNA(Asp/Asn) ligase (607 aa).

Residue glutamate 176 participates in L-aspartate binding. Positions 200–203 (QQFK) are aspartate. Residues arginine 222 and histidine 456 each coordinate L-aspartate. 222–224 (RDE) contacts ATP. Residue glutamate 496 coordinates ATP. Position 503 (arginine 503) interacts with L-aspartate. Residue 548–551 (GIDR) coordinates ATP.

Belongs to the class-II aminoacyl-tRNA synthetase family. Type 1 subfamily. In terms of assembly, homodimer.

It localises to the cytoplasm. It carries out the reaction tRNA(Asx) + L-aspartate + ATP = L-aspartyl-tRNA(Asx) + AMP + diphosphate. In terms of biological role, aspartyl-tRNA synthetase with relaxed tRNA specificity since it is able to aspartylate not only its cognate tRNA(Asp) but also tRNA(Asn). Reaction proceeds in two steps: L-aspartate is first activated by ATP to form Asp-AMP and then transferred to the acceptor end of tRNA(Asp/Asn). In Parvibaculum lavamentivorans (strain DS-1 / DSM 13023 / NCIMB 13966), this protein is Aspartate--tRNA(Asp/Asn) ligase.